Reading from the N-terminus, the 246-residue chain is Mast cell protease 4 (246 aa).

A signal peptide spans 1–18 (MQALLFLMALLLPSGAGA). Positions 19-20 (EE) are cleaved as a propeptide — activation peptide. The 224-residue stretch at 21 to 244 (IIGGVESRPH…YVPWINRVIK (224 aa)) folds into the Peptidase S1 domain. Cysteine 50 and cysteine 66 form a disulfide bridge. Catalysis depends on charge relay system residues histidine 65 and aspartate 109. Intrachain disulfides connect cysteine 143–cysteine 208 and cysteine 174–cysteine 187. Serine 202 acts as the Charge relay system in catalysis.

The protein belongs to the peptidase S1 family. Granzyme subfamily. In terms of assembly, monomer. Interacts with iripin-2, a serine protease inhibitor from Ixodes ricinus saliva. In terms of tissue distribution, submucosal mast cells. In femoral muscle, detected in myocytes but not in mast cells.

Its activity is regulated as follows. Completely inhibited by serine protease inhibitors such as chymostatin, diisopropylfluorophosphate and phenylmethylsulfonyl fluoride, but not by p-tosyl-L-phenylalanine chloromethyl ketone, p-tosyl-L-lysine chloromethyl ketone, pepstatin, E-64, EDTA or o-phenanthroline. Also inhibited by lima bean trypsin inhibitor, soy bean trypsin inhibitor and human plasma alpha1-antichymotrypsin. Has chymotrypsin-like activity. Hydrolyzes the amide bonds of synthetic substrates having Tyr and Phe residues at the P1 position. Preferentially hydrolyzes the 'Tyr-4-|-Ile-5' bond of angiotensin I and the 'Phe-20-|-Ala-21' bond of amyloid beta-protein, and is less active towards the 'Phe-8-|-His-9' bond of angiotensin I and the 'Phe-4-|-Ala-5' and 'Tyr-10-|-Glu-11' bonds of amyloid beta-protein. Involved in thrombin regulation and fibronectin processing. The chain is Mast cell protease 4 (Mcpt4) from Mus musculus (Mouse).